A 542-amino-acid polypeptide reads, in one-letter code: Dihydropyrimidinase (542 aa).

The Zn(2+) site is built by histidine 62, histidine 64, and lysine 167. At lysine 167 the chain carries N6-carboxylysine. Residue tyrosine 172 coordinates substrate. Zn(2+) is bound by residues histidine 199 and histidine 255. Position 331 (serine 331) interacts with substrate. Aspartate 358 provides a ligand contact to Zn(2+). Substrate is bound at residue asparagine 392.

The protein belongs to the metallo-dependent hydrolases superfamily. Hydantoinase/dihydropyrimidinase family. In terms of assembly, homotetramer. The cofactor is Zn(2+). Carboxylation allows a single lysine to coordinate two zinc ions.

The catalysed reaction is 5,6-dihydrouracil + H2O = 3-(carbamoylamino)propanoate + H(+). In terms of biological role, catalyzes the second step of the reductive pyrimidine degradation, the reversible hydrolytic ring opening of dihydropyrimidines. Can catalyze the ring opening of 5,6-dihydrouracil to N-carbamyl-alanine and of 5,6-dihydrothymine to N-carbamyl-amino isobutyrate. This is Dihydropyrimidinase (PYD2) from Lachancea kluyveri (strain ATCC 58438 / CBS 3082 / BCRC 21498 / NBRC 1685 / JCM 7257 / NCYC 543 / NRRL Y-12651) (Yeast).